Consider the following 360-residue polypeptide: Phenylalanine--tRNA ligase alpha subunit (360 aa).

Residue glutamate 260 coordinates Mg(2+).

It belongs to the class-II aminoacyl-tRNA synthetase family. Phe-tRNA synthetase alpha subunit type 1 subfamily. In terms of assembly, tetramer of two alpha and two beta subunits. The cofactor is Mg(2+).

It localises to the cytoplasm. It catalyses the reaction tRNA(Phe) + L-phenylalanine + ATP = L-phenylalanyl-tRNA(Phe) + AMP + diphosphate + H(+). This is Phenylalanine--tRNA ligase alpha subunit from Methylobacterium nodulans (strain LMG 21967 / CNCM I-2342 / ORS 2060).